The chain runs to 295 residues: Bifunctional protein FolD (295 aa).

Residues 165 to 167 (GRS), Ser190, and Ile231 contribute to the NADP(+) site.

This sequence belongs to the tetrahydrofolate dehydrogenase/cyclohydrolase family. As to quaternary structure, homodimer.

It catalyses the reaction (6R)-5,10-methylene-5,6,7,8-tetrahydrofolate + NADP(+) = (6R)-5,10-methenyltetrahydrofolate + NADPH. It carries out the reaction (6R)-5,10-methenyltetrahydrofolate + H2O = (6R)-10-formyltetrahydrofolate + H(+). It participates in one-carbon metabolism; tetrahydrofolate interconversion. Catalyzes the oxidation of 5,10-methylenetetrahydrofolate to 5,10-methenyltetrahydrofolate and then the hydrolysis of 5,10-methenyltetrahydrofolate to 10-formyltetrahydrofolate. This is Bifunctional protein FolD from Nitrosomonas eutropha (strain DSM 101675 / C91 / Nm57).